The sequence spans 881 residues: Leucine--tRNA ligase (881 aa).

The short motif at 48–58 (PYPSGKLHMGH) is the 'HIGH' region element. A 'KMSKS' region motif is present at residues 638 to 642 (KMSKS). Residue Lys-641 participates in ATP binding.

This sequence belongs to the class-I aminoacyl-tRNA synthetase family.

It is found in the cytoplasm. The enzyme catalyses tRNA(Leu) + L-leucine + ATP = L-leucyl-tRNA(Leu) + AMP + diphosphate. The protein is Leucine--tRNA ligase of Janthinobacterium sp. (strain Marseille) (Minibacterium massiliensis).